The chain runs to 1598 residues: Pentafunctional AROM polypeptide (1598 aa).

The segment at 1-384 (MGVPTKISIL…YEPRASTVSN (384 aa)) is 3-dehydroquinate synthase. Residues 44-46 (DTN), 81-84 (ESSK), 114-116 (GGV), and D119 each bind NAD(+). R130 serves as a coordination point for 7-phospho-2-dehydro-3-deoxy-D-arabino-heptonate. Residue 139 to 140 (TT) participates in NAD(+) binding. D146 and K152 together coordinate 7-phospho-2-dehydro-3-deoxy-D-arabino-heptonate. K161 is an NAD(+) binding site. N162 lines the 7-phospho-2-dehydro-3-deoxy-D-arabino-heptonate pocket. NAD(+) is bound by residues 179 to 182 (FLNT) and N190. E194 provides a ligand contact to Zn(2+). 7-phospho-2-dehydro-3-deoxy-D-arabino-heptonate is bound by residues 194-197 (EVIK) and K250. E260 serves as the catalytic Proton acceptor; for 3-dehydroquinate synthase activity. 7-phospho-2-dehydro-3-deoxy-D-arabino-heptonate contacts are provided by residues 264-268 (RNLLN) and H271. Residue H271 coordinates Zn(2+). H275 acts as the Proton acceptor; for 3-dehydroquinate synthase activity in catalysis. 7-phospho-2-dehydro-3-deoxy-D-arabino-heptonate contacts are provided by H287 and K356. H287 is a binding site for Zn(2+). Positions 397–842 (VYPGFPKSLN…WNTLAQTFKV (446 aa)) are EPSP synthase. Residue C824 is the For EPSP synthase activity of the active site. Residues 867-1059 (AASIFIIGMR…RRKENTFFVS (193 aa)) form a shikimate kinase region. 874 to 881 (GMRGAGKT) lines the ATP pocket. The interval 1060-1280 (LTFPDLTPAS…AAPGQLSARE (221 aa)) is 3-dehydroquinase. Residue H1183 is the Proton acceptor; for 3-dehydroquinate dehydratase activity of the active site. The active-site Schiff-base intermediate with substrate; for 3-dehydroquinate dehydratase activity is K1211. The interval 1293–1598 (AKKFAVIGKP…GVSSSDDTIS (306 aa)) is shikimate dehydrogenase.

This sequence in the N-terminal section; belongs to the sugar phosphate cyclases superfamily. Dehydroquinate synthase family. In the 2nd section; belongs to the EPSP synthase family. The protein in the 3rd section; belongs to the shikimate kinase family. It in the 4th section; belongs to the type-I 3-dehydroquinase family. This sequence in the C-terminal section; belongs to the shikimate dehydrogenase family. Homodimer. Zn(2+) serves as cofactor.

The protein localises to the cytoplasm. The enzyme catalyses 7-phospho-2-dehydro-3-deoxy-D-arabino-heptonate = 3-dehydroquinate + phosphate. The catalysed reaction is 3-dehydroquinate = 3-dehydroshikimate + H2O. It catalyses the reaction shikimate + NADP(+) = 3-dehydroshikimate + NADPH + H(+). It carries out the reaction shikimate + ATP = 3-phosphoshikimate + ADP + H(+). The enzyme catalyses 3-phosphoshikimate + phosphoenolpyruvate = 5-O-(1-carboxyvinyl)-3-phosphoshikimate + phosphate. The protein operates within metabolic intermediate biosynthesis; chorismate biosynthesis; chorismate from D-erythrose 4-phosphate and phosphoenolpyruvate: step 2/7. Its pathway is metabolic intermediate biosynthesis; chorismate biosynthesis; chorismate from D-erythrose 4-phosphate and phosphoenolpyruvate: step 3/7. It functions in the pathway metabolic intermediate biosynthesis; chorismate biosynthesis; chorismate from D-erythrose 4-phosphate and phosphoenolpyruvate: step 4/7. It participates in metabolic intermediate biosynthesis; chorismate biosynthesis; chorismate from D-erythrose 4-phosphate and phosphoenolpyruvate: step 5/7. The protein operates within metabolic intermediate biosynthesis; chorismate biosynthesis; chorismate from D-erythrose 4-phosphate and phosphoenolpyruvate: step 6/7. Its function is as follows. The AROM polypeptide catalyzes 5 consecutive enzymatic reactions in prechorismate polyaromatic amino acid biosynthesis. The polypeptide is Pentafunctional AROM polypeptide (Paracoccidioides brasiliensis (strain Pb18)).